The following is a 180-amino-acid chain: Isopentenyl-diphosphate Delta-isomerase (180 aa).

H29 and H36 together coordinate Mn(2+). Residue C71 is part of the active site. A Mn(2+)-binding site is contributed by H73. A Mg(2+)-binding site is contributed by E91. Mn(2+)-binding residues include E118 and E120. Residue E120 is part of the active site.

The protein belongs to the IPP isomerase type 1 family. It depends on Mg(2+) as a cofactor. Mn(2+) is required as a cofactor.

The protein resides in the cytoplasm. The catalysed reaction is isopentenyl diphosphate = dimethylallyl diphosphate. It participates in isoprenoid biosynthesis; dimethylallyl diphosphate biosynthesis; dimethylallyl diphosphate from isopentenyl diphosphate: step 1/1. Catalyzes the 1,3-allylic rearrangement of the homoallylic substrate isopentenyl (IPP) to its highly electrophilic allylic isomer, dimethylallyl diphosphate (DMAPP). The protein is Isopentenyl-diphosphate Delta-isomerase of Kocuria rhizophila (strain ATCC 9341 / DSM 348 / NBRC 103217 / DC2201).